The primary structure comprises 205 residues: Recombination protein RecR (205 aa).

A C4-type zinc finger spans residues 58–75; it reads CSECQNVTDRDSDPCVLC. The Toprim domain maps to 83–182; sequence TVICVVESPV…AVSKIARGIP (100 aa).

Belongs to the RecR family.

Functionally, may play a role in DNA repair. It seems to be involved in an RecBC-independent recombinational process of DNA repair. It may act with RecF and RecO. The chain is Recombination protein RecR from Chlorobium phaeobacteroides (strain DSM 266 / SMG 266 / 2430).